We begin with the raw amino-acid sequence, 1072 residues long: Carbamoyl phosphate synthase large chain (1072 aa).

The carboxyphosphate synthetic domain stretch occupies residues 1 to 401; that stretch reads MPKRLDINTI…SLLKAVRSLE (401 aa). Residues Arg129, Arg169, Gly175, Gly176, Lys208, Ile210, Glu215, Gly241, Val242, His243, Gln284, and Glu298 each coordinate ATP. One can recognise an ATP-grasp 1 domain in the interval 133-327; the sequence is RTLMQDLNEP…IAKLAAKIAV (195 aa). 3 residues coordinate Mg(2+): Gln284, Glu298, and Asn300. Mn(2+) is bound by residues Gln284, Glu298, and Asn300. The tract at residues 402 to 546 is oligomerization domain; it reads LGIYHLELDH…YSTYADENES (145 aa). Residues 547 to 929 form a carbamoyl phosphate synthetic domain region; the sequence is IVTDRKSVVV…ALYKGLVASG (383 aa). Residues 671–861 enclose the ATP-grasp 2 domain; sequence EAALTKLGIP…MANVATKVIL (191 aa). ATP-binding residues include Arg707, Arg746, Glu752, Gly777, Val778, His779, Ser780, Gln820, and Glu832. Gln820, Glu832, and Asn834 together coordinate Mg(2+). Mn(2+) is bound by residues Gln820, Glu832, and Asn834. The MGS-like domain maps to 930-1072; the sequence is INIPTHGSVI…QTKRHEVVHA (143 aa). The segment at 930 to 1072 is allosteric domain; the sequence is INIPTHGSVI…QTKRHEVVHA (143 aa).

Belongs to the CarB family. As to quaternary structure, composed of two chains; the small (or glutamine) chain promotes the hydrolysis of glutamine to ammonia, which is used by the large (or ammonia) chain to synthesize carbamoyl phosphate. Tetramer of heterodimers (alpha,beta)4. Requires Mg(2+) as cofactor. Mn(2+) serves as cofactor.

It catalyses the reaction hydrogencarbonate + L-glutamine + 2 ATP + H2O = carbamoyl phosphate + L-glutamate + 2 ADP + phosphate + 2 H(+). It carries out the reaction hydrogencarbonate + NH4(+) + 2 ATP = carbamoyl phosphate + 2 ADP + phosphate + 2 H(+). It participates in amino-acid biosynthesis; L-arginine biosynthesis; carbamoyl phosphate from bicarbonate: step 1/1. Its pathway is pyrimidine metabolism; UMP biosynthesis via de novo pathway; (S)-dihydroorotate from bicarbonate: step 1/3. Functionally, large subunit of the glutamine-dependent carbamoyl phosphate synthetase (CPSase). CPSase catalyzes the formation of carbamoyl phosphate from the ammonia moiety of glutamine, carbonate, and phosphate donated by ATP, constituting the first step of 2 biosynthetic pathways, one leading to arginine and/or urea and the other to pyrimidine nucleotides. The large subunit (synthetase) binds the substrates ammonia (free or transferred from glutamine from the small subunit), hydrogencarbonate and ATP and carries out an ATP-coupled ligase reaction, activating hydrogencarbonate by forming carboxy phosphate which reacts with ammonia to form carbamoyl phosphate. This chain is Carbamoyl phosphate synthase large chain, found in Bacillus cereus (strain ATCC 14579 / DSM 31 / CCUG 7414 / JCM 2152 / NBRC 15305 / NCIMB 9373 / NCTC 2599 / NRRL B-3711).